Reading from the N-terminus, the 422-residue chain is COUP transcription factor 1 (422 aa).

The interval 1–80 (MAMVVSSWRD…QGPPGSGQSQ (80 aa)) is disordered. The span at 39–66 (EQQQAGSGAPHTPQTPGQPGAPATPGTQ) shows a compositional bias: low complexity. The nuclear receptor DNA-binding region spans 82–157 (HIECVVCGDK…VGMRREAVQR (76 aa)). NR C4-type zinc fingers lie at residues 85-105 (CVVCGDKSSGKHYGQFTCEGC) and 121-145 (CRANRNCPIDQHHRNQCQYCRLKKC). The NR LBD domain occupies 183-409 (YLSGYISLLL…TLIRDMLLSG (227 aa)). The important for dimerization stretch occupies residues 343 to 422 (LQEKSQCALE…NWPYMSIQCS (80 aa)).

This sequence belongs to the nuclear hormone receptor family. NR2 subfamily. As to quaternary structure, binds DNA as dimer; homodimer and probable heterodimer with NR2F6. Interacts with GTF2B; this interaction is direct. Interacts with COPS2.

Its subcellular location is the nucleus. Its function is as follows. Coup (chicken ovalbumin upstream promoter) transcription factor binds to the ovalbumin promoter and, in conjunction with another protein (S300-II) stimulates initiation of transcription. Binds to both direct repeats and palindromes of the 5'-AGGTCA-3' motif. Represses transcriptional activity of LHCG. This chain is COUP transcription factor 1 (Nr2f1), found in Mus musculus (Mouse).